A 290-amino-acid polypeptide reads, in one-letter code: Signal recognition particle receptor FtsY (290 aa).

GTP-binding positions include 91-98, 173-177, and 237-240; these read GTNGSGKT, DTSGR, and TKVD.

The protein belongs to the GTP-binding SRP family. FtsY subfamily. Part of the signal recognition particle protein translocation system, which is composed of SRP and FtsY.

Its subcellular location is the cell inner membrane. The protein localises to the cytoplasm. It carries out the reaction GTP + H2O = GDP + phosphate + H(+). Involved in targeting and insertion of nascent membrane proteins into the cytoplasmic membrane. Acts as a receptor for the complex formed by the signal recognition particle (SRP) and the ribosome-nascent chain (RNC). The sequence is that of Signal recognition particle receptor FtsY from Chlamydia pneumoniae (Chlamydophila pneumoniae).